The primary structure comprises 1273 residues: Lysine-specific histone demethylase 2 (1273 aa).

A compositionally biased stretch (polar residues) spans 199-230 (ENFFDANSPSSQQFPSTYPSRSQNPLSSSGDG). A disordered region spans residues 199–237 (ENFFDANSPSSQQFPSTYPSRSQNPLSSSGDGSTAIHAG). Residues 247-307 (FSNYPYPLDA…LSKSVDNAVL (61 aa)) are a coiled coil. The SWIRM domain occupies 394-490 (AAEAARKCNL…YGCLSFDSSF (97 aa)). FAD-binding positions include 509–551 (IAVV…ILEA), threonine 517, glutamate 550, arginine 558, and 572–573 (TQ). The tract at residues 542-1198 (LPPKVIILEA…GKILRYQRLT (657 aa)) is demethylase activity. The segment at 571-596 (ATQINHHTSNSNSISSNSTSLNPKDV) is disordered. The segment covering 574 to 590 (INHHTSNSNSISSNSTS) has biased composition (low complexity). Residues 681–767 (SVRISWISQF…NTVDTDFSKD (87 aa)) are a coiled coil. A DNA-binding region (HMG box) is located at residues 1115 to 1195 (SKPNANPFLL…AYAGKILRYQ (81 aa)). FAD-binding positions include aspartate 1147 and 1156–1157 (ET). Positions 1215–1273 (KCQDEPIPDDEARLFMQAQREEEQRKQTQDDNISKSREASDEEYHDDGSSDSGYNGTRY) are disordered. Basic and acidic residues predominate over residues 1233-1253 (QREEEQRKQTQDDNISKSREA). Polar residues predominate over residues 1264 to 1273 (SDSGYNGTRY).

This sequence belongs to the flavin monoamine oxidase family. In terms of assembly, component of the SWM histone demethylase complex composed of at least lsd1, lsd2, phf1 and phf2. Interacts directly with lsd1. Requires FAD as cofactor.

The protein localises to the nucleus. Its function is as follows. Catalytic component of the SWM histone demethylase complex that specifically demethylates H3K9me2, a specific tag for epigenetic transcriptional activation, thereby acting as a corepressor. Acts by oxidizing the substrate by FAD to generate the corresponding imine that is subsequently hydrolyzed. Has a role in regulating heterochromatin propagation and euchromatic transcription. Also has a gene activating role. This is Lysine-specific histone demethylase 2 (lsd2) from Schizosaccharomyces pombe (strain 972 / ATCC 24843) (Fission yeast).